Here is a 217-residue protein sequence, read N- to C-terminus: Adapter protein MecA (217 aa).

Belongs to the MecA family. In terms of assembly, homodimer.

In terms of biological role, enables the recognition and targeting of unfolded and aggregated proteins to the ClpC protease or to other proteins involved in proteolysis. The protein is Adapter protein MecA of Listeria welshimeri serovar 6b (strain ATCC 35897 / DSM 20650 / CCUG 15529 / CIP 8149 / NCTC 11857 / SLCC 5334 / V8).